A 344-amino-acid polypeptide reads, in one-letter code: L-rhamnose-proton symporter (344 aa).

10 helical membrane passes run Ile5–Pro25, Trp38–Leu58, Ile72–Leu92, Met101–Ile121, Thr137–Leu157, Leu175–Ala195, Leu214–Ile234, Ile259–Gly279, Phe289–Leu309, and Val323–Ala343.

The protein belongs to the L-rhamnose transporter (TC 2.A.7.6) family.

It is found in the cell inner membrane. It catalyses the reaction L-rhamnopyranose(in) + H(+)(in) = L-rhamnopyranose(out) + H(+)(out). In terms of biological role, uptake of L-rhamnose across the cytoplasmic membrane with the concomitant transport of protons into the cell (symport system). This chain is L-rhamnose-proton symporter, found in Mannheimia succiniciproducens (strain KCTC 0769BP / MBEL55E).